Consider the following 879-residue polypeptide: Alanine--tRNA ligase (879 aa).

Residues His566, His570, Cys668, and His672 each coordinate Zn(2+).

The protein belongs to the class-II aminoacyl-tRNA synthetase family. Requires Zn(2+) as cofactor.

It localises to the cytoplasm. The catalysed reaction is tRNA(Ala) + L-alanine + ATP = L-alanyl-tRNA(Ala) + AMP + diphosphate. Its function is as follows. Catalyzes the attachment of alanine to tRNA(Ala) in a two-step reaction: alanine is first activated by ATP to form Ala-AMP and then transferred to the acceptor end of tRNA(Ala). Also edits incorrectly charged Ser-tRNA(Ala) and Gly-tRNA(Ala) via its editing domain. The polypeptide is Alanine--tRNA ligase (Oceanobacillus iheyensis (strain DSM 14371 / CIP 107618 / JCM 11309 / KCTC 3954 / HTE831)).